A 246-amino-acid polypeptide reads, in one-letter code: Dof zinc finger protein DOF4.7 (246 aa).

Composition is skewed to polar residues over residues 1–12 (MMTSSHQSNTTG) and 27–37 (QINNKEPSPAT). The interval 1–39 (MMTSSHQSNTTGFKPRRIKTTAKPPRQINNKEPSPATQP) is disordered. The segment at 41–95 (LKCPRCDSVNTKFCYYNNYSLSQPRHYCKNCRRYWTRGGALRNVPIGGSTRNKNK) adopts a Dof-type zinc-finger fold. Residues Cys-43, Cys-46, Cys-68, and Cys-71 each contribute to the Zn(2+) site. Residues 216-235 (GGATSGNHEDNDDGEGNLGN) are disordered.

As to quaternary structure, interacts with ZFP2. Highly expressed at the base of all organs of the flower, especially in the abscission zone (AZ) of petals, stamens and sepals. Expressed at low levels in sepals, filaments, stigmatic papillae, tips of young siliques, and at the base of pedicels and leaf trichomes.

It is found in the nucleus. Transcription factor that binds specifically to a 5'-AA[AG]G-3' consensus core sequence. Involved in the negative regulation of floral organ abscission by binding to the typical DOF 5'-AAAG-3' sequences in the promoter of ADPG2/PGAZAT, and by down-regulating its expression. ADPG2/PGAZAT is an abscission-related and cell wall hydrolyzing polygalacturonase. May act through the interaction with ZFP2, an abscission-related transcription factor. This is Dof zinc finger protein DOF4.7 from Arabidopsis thaliana (Mouse-ear cress).